A 158-amino-acid chain; its full sequence is uncharacterized protein (158 aa).

This sequence belongs to the SixA phosphatase family.

This is an uncharacterized protein from Mycobacterium tuberculosis (strain CDC 1551 / Oshkosh).